The primary structure comprises 360 residues: Photosystem II protein D1 (360 aa).

A run of 3 helical transmembrane segments spans residues 32–49 (YLGW…SATF), 121–136 (HFFI…EWEL), and 145–159 (WIFV…AASA). Position 121 (histidine 121) interacts with chlorophyll a. Tyrosine 129 contacts pheophytin a. [CaMn4O5] cluster-binding residues include aspartate 173 and glutamate 192. A helical transmembrane segment spans residues 200–221 (LHMFGVAAVFGGSLFSAMHGSL). Histidine 201 contacts chlorophyll a. Residues histidine 218 and 267–268 (SF) contribute to the a quinone site. Fe cation is bound at residue histidine 218. Residue histidine 275 participates in Fe cation binding. Residues 277 to 291 (FLGAWPVVGIWLTAM) form a helical membrane-spanning segment. Residues histidine 335, glutamate 336, aspartate 345, and alanine 347 each coordinate [CaMn4O5] cluster. A propeptide spanning residues 348–360 (CANCLLSLWPMVG) is cleaved from the precursor.

It belongs to the reaction center PufL/M/PsbA/D family. As to quaternary structure, PSII is composed of 1 copy each of membrane proteins PsbA, PsbB, PsbC, PsbD, PsbE, PsbF, PsbH, PsbI, PsbJ, PsbK, PsbL, PsbM, PsbT, PsbX, PsbY, PsbZ, Psb30/Ycf12, at least 3 peripheral proteins of the oxygen-evolving complex and a large number of cofactors. It forms dimeric complexes. The cofactor is The D1/D2 heterodimer binds P680, chlorophylls that are the primary electron donor of PSII, and subsequent electron acceptors. It shares a non-heme iron and each subunit binds pheophytin, quinone, additional chlorophylls, carotenoids and lipids. D1 provides most of the ligands for the Mn4-Ca-O5 cluster of the oxygen-evolving complex (OEC). There is also a Cl(-1) ion associated with D1 and D2, which is required for oxygen evolution. The PSII complex binds additional chlorophylls, carotenoids and specific lipids.. Post-translationally, tyr-164 forms a radical intermediate that is referred to as redox-active TyrZ, YZ or Y-Z. C-terminally processed by CtpA; processing is essential to allow assembly of the oxygen-evolving complex and thus photosynthetic growth.

It localises to the plastid. The protein resides in the chloroplast thylakoid membrane. The catalysed reaction is 2 a plastoquinone + 4 hnu + 2 H2O = 2 a plastoquinol + O2. Photosystem II (PSII) is a light-driven water:plastoquinone oxidoreductase that uses light energy to abstract electrons from H(2)O, generating O(2) and a proton gradient subsequently used for ATP formation. It consists of a core antenna complex that captures photons, and an electron transfer chain that converts photonic excitation into a charge separation. The D1/D2 (PsbA/PsbD) reaction center heterodimer binds P680, the primary electron donor of PSII as well as several subsequent electron acceptors. This chain is Photosystem II protein D1, found in Karenia mikimotoi (Red tide dinoflagellate).